The chain runs to 171 residues: Peptide deformylase 1 (171 aa).

The Fe cation site is built by Cys-99 and His-141. Residue Glu-142 is part of the active site.

Belongs to the polypeptide deformylase family. Requires Fe(2+) as cofactor.

The enzyme catalyses N-terminal N-formyl-L-methionyl-[peptide] + H2O = N-terminal L-methionyl-[peptide] + formate. In terms of biological role, removes the formyl group from the N-terminal Met of newly synthesized proteins. Requires at least a dipeptide for an efficient rate of reaction. N-terminal L-methionine is a prerequisite for activity but the enzyme has broad specificity at other positions. The chain is Peptide deformylase 1 from Xanthomonas axonopodis pv. citri (strain 306).